Consider the following 632-residue polypeptide: uncharacterized protein (632 aa).

Transmembrane regions (helical) follow at residues 255 to 275 (LFYA…ELRV), 506 to 526 (IALL…LTSI), 566 to 586 (MIFA…SMVF), and 603 to 623 (IVVI…AVLF).

It localises to the cell membrane. This is an uncharacterized protein from Mycoplasma pneumoniae (strain ATCC 29342 / M129 / Subtype 1) (Mycoplasmoides pneumoniae).